Consider the following 197-residue polypeptide: Phosphoheptose isomerase (197 aa).

An SIS domain is found at 34 to 196; sequence MVHCLLGGNK…DRTLFPQDEQ (163 aa). Residue 49–51 participates in substrate binding; the sequence is NGG. Zn(2+) is bound by residues H58 and E62. Substrate is bound by residues E62, 91 to 92, 117 to 119, S122, and Q172; these read ND and STS. Zn(2+)-binding residues include Q172 and H180.

It belongs to the SIS family. GmhA subfamily. In terms of assembly, homotetramer. Zn(2+) serves as cofactor.

It localises to the cytoplasm. The enzyme catalyses 2 D-sedoheptulose 7-phosphate = D-glycero-alpha-D-manno-heptose 7-phosphate + D-glycero-beta-D-manno-heptose 7-phosphate. It functions in the pathway carbohydrate biosynthesis; D-glycero-D-manno-heptose 7-phosphate biosynthesis; D-glycero-alpha-D-manno-heptose 7-phosphate and D-glycero-beta-D-manno-heptose 7-phosphate from sedoheptulose 7-phosphate: step 1/1. Functionally, catalyzes the isomerization of sedoheptulose 7-phosphate in D-glycero-D-manno-heptose 7-phosphate. The chain is Phosphoheptose isomerase from Shewanella baltica (strain OS223).